Here is a 247-residue protein sequence, read N- to C-terminus: Protein At-4/1 (247 aa).

Coiled coils occupy residues 39-126 (VESS…YKIR) and 182-247 (LLME…LSSS).

As to quaternary structure, interacts with viral tomato spotted wilt virus (TSWV) movement protein NSM, which is involved in cell-to cell spread of viral genome and enlargement of the host plasmodesmata size exclusion limit (SEL). Expressed in leaves (at protein level).

It is found in the endoplasmic reticulum. It localises to the cell junction. Its subcellular location is the plasmodesma. Functionally, involved in intra- and inter-cellular trafficking through plasmodesmata (PD). This chain is Protein At-4/1, found in Arabidopsis thaliana (Mouse-ear cress).